The primary structure comprises 213 residues: Small ribosomal subunit protein uS4 (213 aa).

Residues 97–165 (RRLDNVVYRM…AKEQLRIKNA (69 aa)) enclose the S4 RNA-binding domain.

Belongs to the universal ribosomal protein uS4 family. Part of the 30S ribosomal subunit. Contacts protein S5. The interaction surface between S4 and S5 is involved in control of translational fidelity.

Its function is as follows. One of the primary rRNA binding proteins, it binds directly to 16S rRNA where it nucleates assembly of the body of the 30S subunit. Functionally, with S5 and S12 plays an important role in translational accuracy. This is Small ribosomal subunit protein uS4 from Psychrobacter sp. (strain PRwf-1).